Here is a 505-residue protein sequence, read N- to C-terminus: Prenylcysteine oxidase 1 (505 aa).

Positions 1-28 are cleaved as a signal peptide; it reads MGRFAAALVGSLFWLGLLLCGLGSLASA. 3 N-linked (GlcNAc...) asparagine glycosylation sites follow: N196, N323, and N353.

The protein belongs to the prenylcysteine oxidase family. It depends on FAD as a cofactor. Highly expressed in the liver, kidney, heart and brain.

It is found in the lysosome. It catalyses the reaction an S-polyprenyl-L-cysteine + O2 + H2O = a polyprenal + L-cysteine + H2O2. The enzyme catalyses S-(2E,6E)-farnesyl-L-cysteine + O2 + H2O = (2E,6E)-farnesal + L-cysteine + H2O2. The catalysed reaction is [(2E,6E,10E)-geranylgeranyl]-L-cysteine + O2 + H2O = (2E,6E,10E)-geranylgeranial + L-cysteine + H2O2. Prenylcysteine oxidase that cleaves the thioether bond of prenyl-L-cysteines, such as farnesylcysteine and geranylgeranylcysteine. Only active against free prenylcysteines and not prenylcysteine residues within prenylated proteins or peptides. Involved in the final step in the degradation of prenylated proteins, by degrading prenylcysteines after the protein has been degraded. The protein is Prenylcysteine oxidase 1 of Mus musculus (Mouse).